The chain runs to 129 residues: Histone H2A-IV (129 aa).

Belongs to the histone H2A family. In terms of assembly, the nucleosome is a histone octamer containing two molecules each of H2A, H2B, H3 and H4 assembled in one H3-H4 heterotetramer and two H2A-H2B heterodimers. The octamer wraps approximately 147 bp of DNA.

It localises to the nucleus. The protein localises to the chromosome. Its function is as follows. Core component of nucleosome. Nucleosomes wrap and compact DNA into chromatin, limiting DNA accessibility to the cellular machineries which require DNA as a template. Histones thereby play a central role in transcription regulation, DNA repair, DNA replication and chromosomal stability. DNA accessibility is regulated via a complex set of post-translational modifications of histones, also called histone code, and nucleosome remodeling. The protein is Histone H2A-IV of Volvox carteri (Green alga).